A 353-amino-acid chain; its full sequence is tRNA N(3)-cytidine methyltransferase METTL2 (353 aa).

Residues 1-37 (MAAPVVAADSPVIENMPETAGGATENSAEAQKRPQFG) are disordered. S-adenosyl-L-methionine contacts are provided by tryptophan 93, tyrosine 97, glycine 165, aspartate 190, aspartate 216, and isoleucine 237.

This sequence belongs to the methyltransferase superfamily. METL family. In terms of assembly, monomer.

The protein resides in the cytoplasm. The enzyme catalyses cytidine(32) in tRNA(Thr) + S-adenosyl-L-methionine = N(3)-methylcytidine(32) in tRNA(Thr) + S-adenosyl-L-homocysteine + H(+). It catalyses the reaction cytidine(32) in tRNA(Arg)(CCU) + S-adenosyl-L-methionine = N(3)-methylcytidine(32) in tRNA(Arg)(CCU) + S-adenosyl-L-homocysteine + H(+). In terms of biological role, S-adenosyl-L-methionine-dependent methyltransferase that mediates N(3)-methylcytidine modification of residue 32 of the tRNA anticodon loop of tRNA(Thr)(UGU) and tRNA(Arg)(CCU). N(3)-methylcytidine methylation by mettl2a requires the N6-threonylcarbamoylation of tRNA (t6A37) by the EKC/KEOPS complex as prerequisite. This Danio rerio (Zebrafish) protein is tRNA N(3)-cytidine methyltransferase METTL2 (mettl2a).